Consider the following 657-residue polypeptide: Probable Xaa-Pro aminopeptidase P (657 aa).

4 residues coordinate Mn(2+): Asp453, Asp464, Glu562, and Glu576.

Belongs to the peptidase M24B family. It depends on Mn(2+) as a cofactor.

The catalysed reaction is Release of any N-terminal amino acid, including proline, that is linked to proline, even from a dipeptide or tripeptide.. Functionally, catalyzes the removal of a penultimate prolyl residue from the N-termini of peptides. In Talaromyces marneffei (strain ATCC 18224 / CBS 334.59 / QM 7333) (Penicillium marneffei), this protein is Probable Xaa-Pro aminopeptidase P (ampp).